The primary structure comprises 248 residues: Calpain small subunit 2 (248 aa).

Ca(2+) is bound by residues A89, D92, E94, D117, D132, D134, T136, K138, E143, D162, D164, S166, and D205. EF-hand domains follow at residues 119 to 152 (FSLDTCRSIVSVMDSDTTGKLGFEEFKYLWNNIK), 149 to 184 (NNIKKWQCVYKQYDRDHSGSLGSSQLRGALQAAGFQ), 185 to 213 (LNEQLYQMIVRRYANEDGDMDFNNFISCL), and 214 to 248 (VRLDAMFRAFKSLDRDRDGLIQVSIKEWLQLTMYS).

In terms of assembly, heterodimer of a large (catalytic) and a small (regulatory) subunit.

It is found in the cytoplasm. It localises to the cell membrane. In terms of biological role, calcium-regulated non-lysosomal thiol-protease which catalyzes limited proteolysis of substrates involved in cytoskeletal remodeling and signal transduction. This small subunit may act as a tissue-specific chaperone of the large subunit, possibly by helping it fold into its correct conformation for activity. This is Calpain small subunit 2 (CAPNS2) from Homo sapiens (Human).